A 469-amino-acid polypeptide reads, in one-letter code: Glutamine synthetase (469 aa).

Residues 14–98 (NDVKYVDLRF…ITCDVLEPTT (85 aa)) form the GS beta-grasp domain. Residues 106–469 (PRGIAKKAEA…PVEFDMYYSG (364 aa)) form the GS catalytic domain. Mg(2+) is bound by residues E131 and E133. E209 contacts ATP. E214 and E221 together coordinate Mg(2+). Residues 265–266 (NG) and G266 contribute to the L-glutamate site. Position 270 (H270) interacts with Mg(2+). ATP is bound by residues 272–274 (HQS) and S274. R322, E328, and R340 together coordinate L-glutamate. ATP is bound by residues R340, R345, and K353. E358 is a Mg(2+) binding site. R360 is a binding site for L-glutamate. Y398 is modified (O-AMP-tyrosine).

The protein belongs to the glutamine synthetase family. Oligomer of 12 subunits arranged in the form of two hexameric ring. Mg(2+) is required as a cofactor.

Its subcellular location is the cytoplasm. It carries out the reaction L-glutamate + NH4(+) + ATP = L-glutamine + ADP + phosphate + H(+). With respect to regulation, the activity of this enzyme could be controlled by adenylation under conditions of abundant glutamine. Its function is as follows. Catalyzes the ATP-dependent biosynthesis of glutamine from glutamate and ammonia. The sequence is that of Glutamine synthetase from Bradyrhizobium diazoefficiens (strain JCM 10833 / BCRC 13528 / IAM 13628 / NBRC 14792 / USDA 110).